Reading from the N-terminus, the 291-residue chain is MTTLAIDIGGTKLAAALIGADGQIRDRRELPTPASQTPEALRDALSALVSPLQVHAQRVAIASTGIIRDGSLLALNPHNLGGLLHFPLVKTLEQLTDLPTIAINDAQAAAWAEYQALEGDITEMVFITVSTGVGGGVVSGGKLLTGPGGLAGHIGHTLADPHGPVCGCGRTGCVEAIASGRGIAAAAQGELAGANAKTIFTHAGQGDEQAQQLIHRSARTLARLIADIKATTDCQCVVVGGSVGLAEGYLALVETYLAQEPAAFHVDLLAAHYRHDAGLLGAALLAQGEKL.

ATP is bound by residues A5–K12 and G132–S139. The Zn(2+) site is built by H156, C166, C168, and C173.

The protein belongs to the ROK (NagC/XylR) family. NanK subfamily. Homodimer.

The enzyme catalyses an N-acyl-D-mannosamine + ATP = an N-acyl-D-mannosamine 6-phosphate + ADP + H(+). The protein operates within amino-sugar metabolism; N-acetylneuraminate degradation; D-fructose 6-phosphate from N-acetylneuraminate: step 2/5. Catalyzes the phosphorylation of N-acetylmannosamine (ManNAc) to ManNAc-6-P. The polypeptide is N-acetylmannosamine kinase (Escherichia coli (strain SMS-3-5 / SECEC)).